We begin with the raw amino-acid sequence, 344 residues long: Photosystem II protein D1 (344 aa).

The next 3 helical transmembrane spans lie at 29–46 (YIGW…TATT), 118–133 (HFFI…EWEL), and 142–156 (WIAV…AATA). Position 118 (His118) interacts with chlorophyll a. Tyr126 serves as a coordination point for pheophytin a. Asp170 and Glu189 together coordinate [CaMn4O5] cluster. Residues 197–218 (FHMLGVAGVFGGSLFSAMHGSL) traverse the membrane as a helical segment. A chlorophyll a-binding site is contributed by His198. Residues His215 and 264 to 265 (SF) contribute to the a quinone site. His215 is a binding site for Fe cation. Fe cation is bound at residue His272. The chain crosses the membrane as a helical span at residues 274–288 (FLAAWPVIGIWFTAM). Residues His332, Glu333, Asp342, and Ala344 each contribute to the [CaMn4O5] cluster site.

It belongs to the reaction center PufL/M/PsbA/D family. In terms of assembly, PSII is composed of 1 copy each of membrane proteins PsbA, PsbB, PsbC, PsbD, PsbE, PsbF, PsbH, PsbI, PsbJ, PsbK, PsbL, PsbM, PsbT, PsbY, PsbZ, Psb30/Ycf12, at least 3 peripheral proteins of the oxygen-evolving complex and a large number of cofactors. It forms dimeric complexes. The cofactor is The D1/D2 heterodimer binds P680, chlorophylls that are the primary electron donor of PSII, and subsequent electron acceptors. It shares a non-heme iron and each subunit binds pheophytin, quinone, additional chlorophylls, carotenoids and lipids. D1 provides most of the ligands for the Mn4-Ca-O5 cluster of the oxygen-evolving complex (OEC). There is also a Cl(-1) ion associated with D1 and D2, which is required for oxygen evolution. The PSII complex binds additional chlorophylls, carotenoids and specific lipids.. Post-translationally, tyr-161 forms a radical intermediate that is referred to as redox-active TyrZ, YZ or Y-Z.

It is found in the plastid. It localises to the chloroplast thylakoid membrane. It catalyses the reaction 2 a plastoquinone + 4 hnu + 2 H2O = 2 a plastoquinol + O2. In terms of biological role, photosystem II (PSII) is a light-driven water:plastoquinone oxidoreductase that uses light energy to abstract electrons from H(2)O, generating O(2) and a proton gradient subsequently used for ATP formation. It consists of a core antenna complex that captures photons, and an electron transfer chain that converts photonic excitation into a charge separation. The D1/D2 (PsbA/PsbD) reaction center heterodimer binds P680, the primary electron donor of PSII as well as several subsequent electron acceptors. This is Photosystem II protein D1 from Bigelowiella natans (Pedinomonas minutissima).